Consider the following 156-residue polypeptide: Small ribosomal subunit protein uS7 (156 aa).

Belongs to the universal ribosomal protein uS7 family. Part of the 30S ribosomal subunit. Contacts proteins S9 and S11.

One of the primary rRNA binding proteins, it binds directly to 16S rRNA where it nucleates assembly of the head domain of the 30S subunit. Is located at the subunit interface close to the decoding center, probably blocks exit of the E-site tRNA. The polypeptide is Small ribosomal subunit protein uS7 (Geobacillus sp. (strain WCH70)).